We begin with the raw amino-acid sequence, 733 residues long: Polyribonucleotide nucleotidyltransferase (733 aa).

Positions 488 and 494 each coordinate Mg(2+). The region spanning 555 to 614 is the KH domain; the sequence is PRIEVMNIAVDKIRDVIGTGGKVIREIVEQTGAKINIEDDGTIRIASADAKTIEAAKRWI. The S1 motif domain occupies 624–692; it reads GVIYQGTVVK…ERGKVRLSMK (69 aa). Residues 711–722 show a composition bias toward basic and acidic residues; sequence EQEKYTEETHKS. The tract at residues 711–733 is disordered; sequence EQEKYTEETHKSENKRRRKKKEE. The segment covering 723-733 has biased composition (basic residues); it reads ENKRRRKKKEE.

It belongs to the polyribonucleotide nucleotidyltransferase family. Mg(2+) serves as cofactor.

The protein resides in the cytoplasm. The enzyme catalyses RNA(n+1) + phosphate = RNA(n) + a ribonucleoside 5'-diphosphate. Involved in mRNA degradation. Catalyzes the phosphorolysis of single-stranded polyribonucleotides processively in the 3'- to 5'-direction. In Bartonella henselae (strain ATCC 49882 / DSM 28221 / CCUG 30454 / Houston 1) (Rochalimaea henselae), this protein is Polyribonucleotide nucleotidyltransferase.